A 551-amino-acid chain; its full sequence is Cysteine desulfurase SufS (551 aa).

A signal peptide spans 1-22; that stretch reads MRPSSAAWICLLLRIANYTCYS. An N6-(pyridoxal phosphate)lysine modification is found at K327. Residue C500 is the Cysteine persulfide intermediate of the active site.

This sequence belongs to the class-V pyridoxal-phosphate-dependent aminotransferase family. Csd subfamily. As to quaternary structure, monomer. Interacts with SufE; interaction enhances cysteine desulfurase activity of SufS. Pyridoxal 5'-phosphate serves as cofactor.

The protein localises to the plastid. It is found in the apicoplast. It carries out the reaction (sulfur carrier)-H + L-cysteine = (sulfur carrier)-SH + L-alanine. Its pathway is cofactor biosynthesis; iron-sulfur cluster biosynthesis. In terms of biological role, catalyzes sulfur activation and mobilization in sulfur mobilization (SUF) pathway for iron-sulfur (Fe-S) cluster biogenesis. Active when in complex with a partner protein SufE. Required for apicoplast maintenance. Plays a role in the development of sporozoites in oocysts in mosquitoes. The sequence is that of Cysteine desulfurase SufS from Plasmodium vivax.